Here is a 164-residue protein sequence, read N- to C-terminus: Lipoprotein signal peptidase (164 aa).

Transmembrane regions (helical) follow at residues 12 to 32 (WLWL…LILQ), 70 to 90 (WFFA…MYRS), and 102 to 122 (ALII…GFVV). Active-site residues include Asp123 and Asp141. The helical transmembrane segment at 137 to 157 (FNLADTAICVGAALIVLEGFL) threads the bilayer.

Belongs to the peptidase A8 family.

It localises to the cell inner membrane. It carries out the reaction Release of signal peptides from bacterial membrane prolipoproteins. Hydrolyzes -Xaa-Yaa-Zaa-|-(S,diacylglyceryl)Cys-, in which Xaa is hydrophobic (preferably Leu), and Yaa (Ala or Ser) and Zaa (Gly or Ala) have small, neutral side chains.. Its pathway is protein modification; lipoprotein biosynthesis (signal peptide cleavage). In terms of biological role, this protein specifically catalyzes the removal of signal peptides from prolipoproteins. The sequence is that of Lipoprotein signal peptidase from Shigella flexneri.